A 163-amino-acid chain; its full sequence is Nucleotide-binding protein Cj0374 (163 aa).

The protein belongs to the YajQ family.

Its function is as follows. Nucleotide-binding protein. In Campylobacter jejuni subsp. jejuni serotype O:2 (strain ATCC 700819 / NCTC 11168), this protein is Nucleotide-binding protein Cj0374.